A 158-amino-acid polypeptide reads, in one-letter code: MLVMKLFTCFLQVLAGLAVHSQGALSAGNNSTEVEVVPFNEVWGRSYCRPMEKLVYILDEYPDEVSHIFSPSCVLLSRCSGCCGDEGLHCVPIKTANITMQILKIPPNRDPHFYVEMTFSQDVLCECRPILETTKAERRKTKGKRKRSRNSQTEEPHP.

Positions 1 to 18 (MLVMKLFTCFLQVLAGLA) are cleaved as a signal peptide. N-linked (GlcNAc...) asparagine glycosylation is found at asparagine 29 and asparagine 30. Intrachain disulfides connect cysteine 48/cysteine 90, cysteine 79/cysteine 125, and cysteine 83/cysteine 127. The N-linked (GlcNAc...) asparagine glycan is linked to asparagine 97. A disordered region spans residues 136 to 158 (AERRKTKGKRKRSRNSQTEEPHP). The segment covering 137–149 (ERRKTKGKRKRSR) has biased composition (basic residues).

It belongs to the PDGF/VEGF growth factor family. Antiparallel homodimer; disulfide-linked. Also found as heterodimer with VEGFA/VEGF.

The protein resides in the secreted. In terms of biological role, growth factor active in angiogenesis and endothelial cell growth, stimulating their proliferation and migration. It binds to the receptor FLT1/VEGFR-1. Also promotes cell tumor growth. This is Placenta growth factor (Pgf) from Mus musculus (Mouse).